We begin with the raw amino-acid sequence, 204 residues long: Colicin-A (204 aa).

2 helical membrane-spanning segments follow: residues Ser139 to Tyr161 and Leu165 to Ile187.

The protein belongs to the channel forming colicin family.

It is found in the cell membrane. Its function is as follows. This colicin is a channel-forming colicin. This class of transmembrane toxins depolarize the cytoplasmic membrane, leading to dissipation of cellular energy. Functionally, colicins are polypeptide toxins produced by and active against E.coli and closely related bacteria. The sequence is that of Colicin-A (caa) from Escherichia coli.